The following is a 373-amino-acid chain: MKLLSVLALSATATSVLGASIPVDARAEKFLIELAPGETRWVTEEEKWELKRKGQDFFDITDEEVGFTAAVAQPAIAYPTSIRHANAVNAMIATLSKENMQRDLTKLSSFQTAYYKVDFGKQSATWLQEQVQAAINTAGANRYGAKVASFRHNFAQHSIIATIPGRSPEVVVVGAHQDSINQRSPMTGRAPGADDNGSGSVTILEALRGVLRDQTILQGKAANTIEFHWYAGEEAGLLGSQAIFANYKQTGKKVKGMLNQDMTGYIKGMVDKGLKVSFGIITDNVNANLTKFVRMVITKYCSIPTIDTRCGYACSDHASANRNGYPSAMVAESPIDLLDPHLHTDSDNISYLDFDHMIEHAKLIVGFVTELAK.

A signal peptide spans Met-1–Gly-18. Residues His-176 and Asp-195 each coordinate Zn(2+). N-linked (GlcNAc...) asparagine glycosylation occurs at Asn-196. Zn(2+) contacts are provided by Glu-234 and Asp-261. Residue Asn-288 is glycosylated (N-linked (GlcNAc...) asparagine). Cysteines 310 and 314 form a disulfide. His-343 lines the Zn(2+) pocket. Residue Asn-348 is glycosylated (N-linked (GlcNAc...) asparagine).

This sequence belongs to the peptidase M28 family. M28E subfamily. Monomer. The cofactor is Zn(2+).

Its subcellular location is the secreted. Activity is inhibited by EDTA, o-phenanthroline, bestatin and amastatin. Extracellular aminopeptidase which contributes to pathogenicity. This Trichophyton rubrum (Athlete's foot fungus) protein is Leucine aminopeptidase 1 (LAP1).